The chain runs to 581 residues: Chaperonin GroEL 1 (581 aa).

ATP contacts are provided by residues 29 to 32, 86 to 90, G413, and D492; these read TIGP and DGTTT. Residues 522–543 form a disordered region; it reads PEPEPAAPGGPSGDPMGGMGGM. Positions 531 to 543 are enriched in gly residues; the sequence is GPSGDPMGGMGGM.

This sequence belongs to the chaperonin (HSP60) family. Forms a cylinder of 14 subunits composed of two heptameric rings stacked back-to-back. Interacts with the co-chaperonin GroES.

The protein resides in the cytoplasm. It catalyses the reaction ATP + H2O + a folded polypeptide = ADP + phosphate + an unfolded polypeptide.. Together with its co-chaperonin GroES, plays an essential role in assisting protein folding. The GroEL-GroES system forms a nano-cage that allows encapsulation of the non-native substrate proteins and provides a physical environment optimized to promote and accelerate protein folding. This is Chaperonin GroEL 1 from Prochlorococcus marinus (strain MIT 9215).